We begin with the raw amino-acid sequence, 376 residues long: NIF3-like protein 1 (376 aa).

K108 is modified (N6-acetyllysine). The interval 243–376 (LLLHTGMGRL…ETDRDPLRVV (134 aa)) is mediates interaction with COPS2. T254 bears the Phosphothreonine mark. S258 carries the post-translational modification Phosphoserine.

It belongs to the GTP cyclohydrolase I type 2/NIF3 family. Homodimer. Interacts with COPS2. Interacts with THOC7.

It localises to the cytoplasm. The protein localises to the nucleus. May function as a transcriptional corepressor through its interaction with COPS2, negatively regulating the expression of genes involved in neuronal differentiation. The polypeptide is NIF3-like protein 1 (Rattus norvegicus (Rat)).